Consider the following 360-residue polypeptide: UDP-D-xylose:L-fucose alpha-1,3-D-xylosyltransferase MGP4 (360 aa).

The interval 1-25 (MAQQKFLHQRPIQNPFTNPFSSSPL) is disordered. The Cytoplasmic segment spans residues 1 to 41 (MAQQKFLHQRPIQNPFTNPFSSSPLSTSSISNRPISLLSRN). Residues 14 to 25 (NPFTNPFSSSPL) show a composition bias toward low complexity. Residues 42-62 (GLLLLLALLVILGVFLPWAGS) traverse the membrane as a helical; Signal-anchor for type II membrane protein segment. Topologically, residues 63–360 (PLFPSPNKLS…ASESPLGKLE (298 aa)) are lumenal. N-linked (GlcNAc...) asparagine glycans are attached at residues Asn93 and Asn168. Residues 191 to 193 (DVD) carry the DXD motif motif. Asn285 and Asn310 each carry an N-linked (GlcNAc...) asparagine glycan.

It belongs to the glycosyltransferase 77 family. Mn(2+) is required as a cofactor. It depends on Mg(2+) as a cofactor. In terms of tissue distribution, widely expressed.

The protein localises to the golgi apparatus membrane. Its function is as follows. Catalyzes the transfer of D-xylose from UDP-alpha-D-xylose onto L-fucose. Probably involved in the biosynthesis of rhamnogalacturonan II (RG-II) through xylosylation of the internal fucose moiety of the A-chain of RG-II, a structurally complex pectic polysaccharide of the primary cell wall. RG-II is essential for the cell wall integrity of rapidly growing tissues such as roots and pollen tube growth and elongation. The protein is UDP-D-xylose:L-fucose alpha-1,3-D-xylosyltransferase MGP4 of Arabidopsis thaliana (Mouse-ear cress).